Consider the following 873-residue polypeptide: MSNKPDANDQCMVKETISRMSMSKEKPFLRRNYSSPSFNDSVNSVNDEFQTYQLPNGEFSDNMNDLYFPFRKGNESLMTENSNYPISEQDTQHNHISDFPSRRMQLDGMNHSNNDTYSTAIPFSKDSSVFDAVGQQSSVPIHINPAYTNSHQNSYSLNETYLSYDFFDNHRGASSSAVSKDGLASPRPTKDVDADDTTWYFTSSPSFQPLKDSDRSQTKNTHEETSPIVSSPEDDADAAFKPSSLPSTSISASSNAFYKPAAPDNERPLDPHITPYLRLQLLTTGADDNDIRKNALTQVDYLSYDWKETDIWASWREITKTKANYDNGIRLENASWRTWMKHKFKLKTISPETLNWLKECDVTWLYGPLLHTSMPSRHHSHRKKEKEKEKSKAPRVTPLTHKTNDDEANHSETSSGSSLAKKPILKRRTPQELLLSGRDLTPWPQIRRFDSLLARNRGDIFSNRNHATIRSALFSQRYPSHSKRHIHFNDRVQQCIAVDIDSLPSDSESASYNTDDANSVVSPSKDGISTTTVSSDATRSSQSSHFRIIEDLPDSKLKYSLEDQATYDQSSRYPGRHFGKTGRSHFPRAPEYYGENDFEEDEVYRDDRHYENEHDEYDPNLIYYDNEPTEENRLVFEDTNNTFIDTDSDDSNADESQFLEYANDSPNSSESLESLNNQSYSSSPYSVFSHPPPYMGRQSLNDSPQTSDFKASNLNDSSSNVHSIFQTRETTSPSVQNKTPTKYHRELKSSKDGHEQASPLVSSSPSGSFTSQISPAATTTATNLDAVSLSPSTVRTGSQISDIGNDAISTTRKTVRAFLENANPYSTNNDGNPSNNTSDVEVNETSMNDNSEEPISSNWLVDLFQKSLKSFRE.

7 disordered regions span residues 1–24 (MSNKPDANDQCMVKETISRMSMSK), 175–251 (SSAV…TSIS), 375–423 (PSRH…AKKP), 506–540 (DSESASYNTDDANSVVSPSKDGISTTTVSSDATRS), 568–592 (DQSSRYPGRHFGKTGRSHFPRAPEY), 662–773 (ANDS…TSQI), and 822–855 (ANPYSTNNDGNPSNNTSDVEVNETSMNDNSEEPI). A compositionally biased stretch (basic and acidic residues) spans 211-225 (KDSDRSQTKNTHEET). Residues 376 to 385 (SRHHSHRKKE) show a composition bias toward basic residues. A compositionally biased stretch (basic residues) spans 574–586 (PGRHFGKTGRSHF). Over residues 665–686 (SPNSSESLESLNNQSYSSSPYS) the composition is skewed to low complexity. Positions 698–740 (QSLNDSPQTSDFKASNLNDSSSNVHSIFQTRETTSPSVQNKTP) are enriched in polar residues. The span at 743–755 (YHRELKSSKDGHE) shows a compositional bias: basic and acidic residues. The segment covering 758–773 (SPLVSSSPSGSFTSQI) has biased composition (low complexity). Polar residues predominate over residues 823-855 (NPYSTNNDGNPSNNTSDVEVNETSMNDNSEEPI).

Its subcellular location is the cytoplasm. It is found in the vacuole membrane. This is an uncharacterized protein from Schizosaccharomyces pombe (strain 972 / ATCC 24843) (Fission yeast).